A 431-amino-acid chain; its full sequence is Divalent metal cation transporter MntH (431 aa).

12 helical membrane passes run 30-50 (WSWT…IDPG), 63-83 (GYTL…IQTL), 106-126 (PLVW…DLAE), 137-159 (LFGL…ALHL), 169-189 (ILIG…LVLS), 209-229 (YALY…VIYL), 257-277 (VILG…MAAA), 287-307 (VATI…VTAS), 309-329 (VFGL…TLSG), 341-361 (IPLW…IMLG), 367-387 (ALVA…VPLL), and 405-425 (VTGV…YVLF).

The protein belongs to the NRAMP family.

It is found in the cell inner membrane. Its function is as follows. H(+)-stimulated, divalent metal cation uptake system. This is Divalent metal cation transporter MntH from Chromohalobacter salexigens (strain ATCC BAA-138 / DSM 3043 / CIP 106854 / NCIMB 13768 / 1H11).